The sequence spans 505 residues: Glucose-6-phosphate 1-dehydrogenase (505 aa).

Ser2 bears the N-acetylserine mark. NADP(+)-binding positions include 18–25 (GASGDLAK) and Arg52. Ser142 is modified (phosphoserine). Tyr145 is subject to Phosphotyrosine. Lys157 lines the NADP(+) pocket. D-glucose 6-phosphate-binding positions include Lys157, 187-191 (HYLGK), Glu225, and Asp244. Residue His249 is the Proton acceptor of the active site. Arg340 lines the NADP(+) pocket. A D-glucose 6-phosphate-binding site is contributed by Lys343. NADP(+)-binding residues include Lys349, Arg353, and Arg375. Gln377 is a D-glucose 6-phosphate binding site. NADP(+)-binding positions include 383 to 385 (YLK) and Arg470.

The protein belongs to the glucose-6-phosphate dehydrogenase family.

It catalyses the reaction D-glucose 6-phosphate + NADP(+) = 6-phospho-D-glucono-1,5-lactone + NADPH + H(+). It participates in carbohydrate degradation; pentose phosphate pathway; D-ribulose 5-phosphate from D-glucose 6-phosphate (oxidative stage): step 1/3. Its function is as follows. Catalyzes the rate-limiting step of the oxidative pentose-phosphate pathway, which represents a route for the dissimilation of carbohydrates besides glycolysis. The main function of this enzyme is to provide reducing power (NADPH) and pentose phosphates for fatty acid and nucleic acid synthesis. This Saccharomyces cerevisiae (strain ATCC 204508 / S288c) (Baker's yeast) protein is Glucose-6-phosphate 1-dehydrogenase (ZWF1).